Consider the following 692-residue polypeptide: Translation initiation factor IF-2 (692 aa).

Residues 51–114 form a disordered region; that stretch reads KAKPENAKKG…KPAETPGKIT (64 aa). Low complexity predominate over residues 59–84; the sequence is KGQNQKQSNNQQQNRQKQNQKNQSKP. Residues 85 to 94 are compositionally biased toward basic residues; sequence NKNKKQKGPK. Residues 193–362 enclose the tr-type G domain; the sequence is ERPAVVTIMG…LLVSEVEELK (170 aa). Residues 202–209 are G1; it reads GHVDHGKT. 202–209 is a binding site for GTP; sequence GHVDHGKT. A G2 region spans residues 227–231; the sequence is GITQH. Positions 248-251 are G3; sequence DTPG. GTP is bound by residues 248 to 252 and 302 to 305; these read DTPGH and NKMD. A G4 region spans residues 302–305; sequence NKMD. The segment at 338-340 is G5; that stretch reads SAI.

The protein belongs to the TRAFAC class translation factor GTPase superfamily. Classic translation factor GTPase family. IF-2 subfamily.

It localises to the cytoplasm. One of the essential components for the initiation of protein synthesis. Protects formylmethionyl-tRNA from spontaneous hydrolysis and promotes its binding to the 30S ribosomal subunits. Also involved in the hydrolysis of GTP during the formation of the 70S ribosomal complex. This is Translation initiation factor IF-2 from Oceanobacillus iheyensis (strain DSM 14371 / CIP 107618 / JCM 11309 / KCTC 3954 / HTE831).